A 318-amino-acid chain; its full sequence is MLSESSSFLKGVMLGSIFCALITMLGHIRIGHGSRMHHHEHHHLQAPNKEDILKISEDERMELSKSFRVYCILLVRPKDVSLWAAVKETWTNHCDKVDFFSSENVKVFESINMETNDMWLMMRKAYKYAFDKYRDQYNWFFLARPTTFAIIENLKYFLLKKDPSQPFYLGHTVKSGDLEYVSMEGGIVLSIESMKRLNSLLSIPEKCPEQGGMIWKISEDKQLAVCLKYAGVFAENAEDSEGKDIFNTKSVGLFIKEAMTNHPNQVVEGCCSDMAVTFNGLTPNQMHVMMYGVYRLRAFGHVFNDALVFLPPNGSDND.

Topologically, residues 1 to 6 are cytoplasmic; the sequence is MLSESS. Residues 7 to 26 traverse the membrane as a helical; Signal-anchor for type II membrane protein segment; sequence SFLKGVMLGSIFCALITMLG. Residues 27 to 318 are Lumenal-facing; that stretch reads HIRIGHGSRM…FLPPNGSDND (292 aa).

The protein belongs to the glycosyltransferase 31 family. Beta3-Gal-T subfamily. In terms of assembly, associates with core 1 beta-3-galactosyltransferase (C1GALT1), probably not with the soluble active form.

The protein localises to the membrane. Functionally, probable chaperone required for the generation of 1 O-glycan Gal-beta1-3GalNAc-alpha1-Ser/Thr (T antigen), which is a precursor for many extended O-glycans in glycoproteins. Probably acts as a specific molecular chaperone assisting the folding/stability of core 1 beta-3-galactosyltransferase (C1GALT1). This is C1GALT1-specific chaperone 1 (C1GALT1C1) from Bos taurus (Bovine).